Reading from the N-terminus, the 269-residue chain is Holocytochrome-c synthase (269 aa).

Residues 1-72 (MGWFWADQKT…ASKQPGQKMD (72 aa)) are disordered. HRM repeat units follow at residues 25–30 (GCPVMH) and 41–46 (ECPVMQ).

It belongs to the cytochrome c-type heme lyase family.

The protein localises to the mitochondrion inner membrane. The protein resides in the mitochondrion intermembrane space. It catalyses the reaction holo-[cytochrome c] = apo-[cytochrome c] + heme b. Lyase that catalyzes the covalent linking of the heme group to the cytochrome C apoprotein to produce the mature functional cytochrome. This Saccharomyces cerevisiae (strain ATCC 204508 / S288c) (Baker's yeast) protein is Holocytochrome-c synthase (CYC3).